A 76-amino-acid polypeptide reads, in one-letter code: Small ribosomal subunit protein bS18 (76 aa).

This sequence belongs to the bacterial ribosomal protein bS18 family. In terms of assembly, part of the 30S ribosomal subunit. Forms a tight heterodimer with protein bS6.

Its function is as follows. Binds as a heterodimer with protein bS6 to the central domain of the 16S rRNA, where it helps stabilize the platform of the 30S subunit. The chain is Small ribosomal subunit protein bS18 from Xylella fastidiosa (strain 9a5c).